A 532-amino-acid polypeptide reads, in one-letter code: Autoinducer-2 kinase (532 aa).

This sequence belongs to the FGGY kinase family.

The protein localises to the cytoplasm. The enzyme catalyses (S)-4,5-dihydroxypentane-2,3-dione + ATP = (2S)-2-hydroxy-3,4-dioxopentyl phosphate + ADP + H(+). Catalyzes the phosphorylation of autoinducer-2 (AI-2) to phospho-AI-2, which subsequently inactivates the transcriptional regulator LsrR and leads to the transcription of the lsr operon. Phosphorylates the ring-open form of (S)-4,5-dihydroxypentane-2,3-dione (DPD), which is the precursor to all AI-2 signaling molecules, at the C5 position. The protein is Autoinducer-2 kinase of Klebsiella pneumoniae subsp. pneumoniae (strain ATCC 700721 / MGH 78578).